The primary structure comprises 139 residues: Nucleoside diphosphate kinase (139 aa).

Positions 10, 58, 86, 92, 104, and 114 each coordinate ATP. H117 acts as the Pros-phosphohistidine intermediate in catalysis.

Belongs to the NDK family. As to quaternary structure, homotetramer. Mg(2+) serves as cofactor.

Its subcellular location is the cytoplasm. The catalysed reaction is a 2'-deoxyribonucleoside 5'-diphosphate + ATP = a 2'-deoxyribonucleoside 5'-triphosphate + ADP. It catalyses the reaction a ribonucleoside 5'-diphosphate + ATP = a ribonucleoside 5'-triphosphate + ADP. Its function is as follows. Major role in the synthesis of nucleoside triphosphates other than ATP. The ATP gamma phosphate is transferred to the NDP beta phosphate via a ping-pong mechanism, using a phosphorylated active-site intermediate. The chain is Nucleoside diphosphate kinase from Rhodococcus opacus (strain B4).